We begin with the raw amino-acid sequence, 143 residues long: Large ribosomal subunit protein uL16 (143 aa).

The span at 1–17 (MLQPKRTKFRKAHKGRI) shows a compositional bias: basic residues. Positions 1 to 20 (MLQPKRTKFRKAHKGRIHGN) are disordered.

The protein belongs to the universal ribosomal protein uL16 family. In terms of assembly, part of the 50S ribosomal subunit.

In terms of biological role, binds 23S rRNA and is also seen to make contacts with the A and possibly P site tRNAs. The polypeptide is Large ribosomal subunit protein uL16 (Zymomonas mobilis subsp. mobilis (strain ATCC 31821 / ZM4 / CP4)).